Consider the following 154-residue polypeptide: Cell cycle regulator of non-homologous end joining (154 aa).

An N-acetylmethionine modification is found at Met1. Positions 1-21 (METLKSENKKRVLPSWMTAPV) match the KBM motif. Residues 77–144 (EEPTLVAPDK…RSPEEEEEDA (68 aa)) form a disordered region. Residues 95–105 (ASPHTSSPGSS) are compositionally biased toward low complexity. The short motif at 144 to 154 (ALKYVREIFFS) is the XLM element.

In terms of assembly, interacts (via KBM motif) with XRCC5/Ku80 and XRCC6/Ku70 heterodimer. Interacts (via XLF motif) with TRIM28/KAP1, ATM, MRE11, NBN and RAD50. Interacts with splicing factor SF3B1. Interacts with ERCC6L2; this interaction is DNA independent.

It is found in the cytoplasm. The protein localises to the nucleus. It localises to the chromosome. In terms of biological role, cell-cycle-specific regulator of classical non-homologous end joining (NHEJ) of DNA double-strand break (DSB) repair, which can act both as an activator or inhibitor of NHEJ, depending on the cell cycle phase. Acts as a regulator of DNA repair pathway choice by specifically inhibiting classical NHEJ during the S and G2 phases, thereby promoting error-free repair by homologous recombination during cell cycle phases when sister chromatids are present. Preferentially protects single-stranded overhangs at break sites by inhibiting classical NHEJ, thereby creating a local environment that favors homologous recombination. Acts via interaction with XRCC5/Ku80 and XRCC6/Ku70. In contrast, acts as an activator of NHEJ during G1 phase of the cell cycle: promotes classical NHEJ in G1 phase cells via multivalent interactions that increase the affinity of DNA damage response proteins for DSB-associated chromatin. Also involved in immunoglobulin V(D)J recombination. May act as a regulator of proteasome. In case of infection by a retrovirus, may regulate the proteasome during the uncoating phase of retrovirus. The chain is Cell cycle regulator of non-homologous end joining from Cricetulus griseus (Chinese hamster).